The primary structure comprises 447 residues: Sensor protein VanSB (447 aa).

2 consecutive transmembrane segments (helical) span residues 10-30 (VFSY…TLFA) and 137-155 (GIVM…AYIF). The 52-residue stretch at 157-208 (RQMTTPIKALADSANKMANLKEVPPPLERKDELGALAHDMHSMYIRLKETIA) folds into the HAMP domain. Residues 230–445 (AASHELKTPI…LFWLDLPPTS (216 aa)) form the Histidine kinase domain. His-233 is subject to Phosphohistidine; by autocatalysis.

It is found in the cell membrane. It carries out the reaction ATP + protein L-histidine = ADP + protein N-phospho-L-histidine.. In terms of biological role, member of the two-component regulatory system VanSB/VanRB. Activates the transcription of vanSB, vanYB and vanW in response to vancomycin which results in vancomycin resistance. VanSB may activate VanRB by phosphorylation. May also act as a phospho-VanRB phosphatase. The chain is Sensor protein VanSB (vanSB) from Enterococcus faecalis (strain ATCC 700802 / V583).